The following is a 308-amino-acid chain: Ribonuclease Z (308 aa).

Residues H63, H65, D67, H68, H141, D212, and H270 each contribute to the Zn(2+) site. Residue D67 is the Proton acceptor of the active site.

Belongs to the RNase Z family. As to quaternary structure, homodimer. The cofactor is Zn(2+).

It carries out the reaction Endonucleolytic cleavage of RNA, removing extra 3' nucleotides from tRNA precursor, generating 3' termini of tRNAs. A 3'-hydroxy group is left at the tRNA terminus and a 5'-phosphoryl group is left at the trailer molecule.. In terms of biological role, zinc phosphodiesterase, which displays some tRNA 3'-processing endonuclease activity. Probably involved in tRNA maturation, by removing a 3'-trailer from precursor tRNA. The sequence is that of Ribonuclease Z from Pediococcus pentosaceus (strain ATCC 25745 / CCUG 21536 / LMG 10740 / 183-1w).